The following is a 64-amino-acid chain: Translation machinery-associated protein 7 (64 aa).

Disordered regions lie at residues 1–38 (MSSR…ADAA) and 45–64 (ANMK…SGKK). The segment covering 27–38 (IAFKEKQKADAA) has biased composition (basic and acidic residues). Over residues 53–64 (LVGGGIKKSGKK) the composition is skewed to gly residues.

This sequence belongs to the TMA7 family. As to quaternary structure, interacts with the 40S ribosomal subunit.

Its subcellular location is the cytoplasm. The protein localises to the nucleus. Its function is as follows. Involved in protein synthesis. In Saccharomyces cerevisiae (strain ATCC 204508 / S288c) (Baker's yeast), this protein is Translation machinery-associated protein 7 (TMA7).